The sequence spans 271 residues: Thiazole synthase (271 aa).

K95 (schiff-base intermediate with DXP) is an active-site residue. 1-deoxy-D-xylulose 5-phosphate contacts are provided by residues G156, 182–183, and 204–205; these read AG and NT.

It belongs to the ThiG family. As to quaternary structure, homotetramer. Forms heterodimers with either ThiH or ThiS.

The protein resides in the cytoplasm. The catalysed reaction is [ThiS sulfur-carrier protein]-C-terminal-Gly-aminoethanethioate + 2-iminoacetate + 1-deoxy-D-xylulose 5-phosphate = [ThiS sulfur-carrier protein]-C-terminal Gly-Gly + 2-[(2R,5Z)-2-carboxy-4-methylthiazol-5(2H)-ylidene]ethyl phosphate + 2 H2O + H(+). Its pathway is cofactor biosynthesis; thiamine diphosphate biosynthesis. Catalyzes the rearrangement of 1-deoxy-D-xylulose 5-phosphate (DXP) to produce the thiazole phosphate moiety of thiamine. Sulfur is provided by the thiocarboxylate moiety of the carrier protein ThiS. In vitro, sulfur can be provided by H(2)S. The protein is Thiazole synthase of Shewanella amazonensis (strain ATCC BAA-1098 / SB2B).